Consider the following 284-residue polypeptide: D-tagatose-1,6-bisphosphate aldolase subunit GatY (284 aa).

The Proton donor role is filled by Asp-82. Zn(2+) is bound by residues His-83 and His-180. Gly-181 contributes to the dihydroxyacetone phosphate binding site. His-208 contributes to the Zn(2+) binding site. Dihydroxyacetone phosphate contacts are provided by residues 209–211 (GAS) and 230–233 (NVAT).

It belongs to the class II fructose-bisphosphate aldolase family. TagBP aldolase GatY subfamily. Forms a complex with GatZ. Requires Zn(2+) as cofactor.

It carries out the reaction D-tagatofuranose 1,6-bisphosphate = D-glyceraldehyde 3-phosphate + dihydroxyacetone phosphate. The protein operates within carbohydrate metabolism; D-tagatose 6-phosphate degradation; D-glyceraldehyde 3-phosphate and glycerone phosphate from D-tagatose 6-phosphate: step 2/2. In terms of biological role, catalytic subunit of the tagatose-1,6-bisphosphate aldolase GatYZ, which catalyzes the reversible aldol condensation of dihydroxyacetone phosphate (DHAP or glycerone-phosphate) with glyceraldehyde 3-phosphate (G3P) to produce tagatose 1,6-bisphosphate (TBP). Requires GatZ subunit for full activity and stability. Is involved in the catabolism of galactitol. The polypeptide is D-tagatose-1,6-bisphosphate aldolase subunit GatY (Escherichia coli O17:K52:H18 (strain UMN026 / ExPEC)).